The chain runs to 230 residues: Sugar fermentation stimulation protein homolog (230 aa).

This sequence belongs to the SfsA family.

The sequence is that of Sugar fermentation stimulation protein homolog from Thermoanaerobacter pseudethanolicus (strain ATCC 33223 / 39E) (Clostridium thermohydrosulfuricum).